The primary structure comprises 177 residues: Large ribosomal subunit protein uL6 (177 aa).

It belongs to the universal ribosomal protein uL6 family. In terms of assembly, part of the 50S ribosomal subunit.

Functionally, this protein binds to the 23S rRNA, and is important in its secondary structure. It is located near the subunit interface in the base of the L7/L12 stalk, and near the tRNA binding site of the peptidyltransferase center. The chain is Large ribosomal subunit protein uL6 from Rhizobium johnstonii (strain DSM 114642 / LMG 32736 / 3841) (Rhizobium leguminosarum bv. viciae).